The chain runs to 72 residues: Alpha-elapitoxin-Dv2b (72 aa).

Cystine bridges form between Cys-3/Cys-21, Cys-14/Cys-42, Cys-27/Cys-31, Cys-46/Cys-57, and Cys-58/Cys-63.

The protein belongs to the three-finger toxin family. Long-chain subfamily. Type II alpha-neurotoxin sub-subfamily. Neurotoxin 4.7.3 differs from 4.9.3 only in that Trp-26 has undergone partial photooxidation. As to expression, expressed by the venom gland.

The protein resides in the secreted. In terms of biological role, binds with high affinity to muscular (alpha-1/CHRNA1) and neuronal (alpha-7/CHRNA7) nicotinic acetylcholine receptor (nAChR) and inhibits acetylcholine from binding to the receptor, thereby impairing neuromuscular and neuronal transmission. The sequence is that of Alpha-elapitoxin-Dv2b from Dendroaspis viridis (Western green mamba).